Reading from the N-terminus, the 1923-residue chain is GREB1-like protein (1923 aa).

Positions 87 to 96 (EDDEDDEEMS) are enriched in acidic residues. Disordered stretches follow at residues 87–111 (EDDEDDEEMSDSNSPPIPYSQKPAP), 246–326 (SCHS…GPPK), and 1101–1222 (RAAV…RGCR). The segment covering 252-262 (PSSSVSSTVTP) has biased composition (low complexity). Composition is skewed to polar residues over residues 263-278 (ENGTTNGYKSGFTQTD), 296-307 (TPAHTGNYSLSP), and 1119-1161 (PQSN…SPAT). A compositionally biased stretch (low complexity) spans 1195–1206 (SSTTSKPSSSSS). The helical transmembrane segment at 1843 to 1862 (GVFFSGLLLYLCDSFVGADL) threads the bilayer.

It belongs to the GREB1 family. In terms of tissue distribution, widely expressed, with prominent expression in the cochlea. Expressed at high levels in fetal kidney. In adult tissues, highest levels in vagina, cervix and epididymis.

It is found in the membrane. In terms of biological role, plays a major role in early metanephros and genital development. In Homo sapiens (Human), this protein is GREB1-like protein (GREB1L).